We begin with the raw amino-acid sequence, 462 residues long: Glycoprotein endo-alpha-1,2-mannosidase (462 aa).

At 1 to 9 (MAKFRRRTC) the chain is on the cytoplasmic side. A helical; Signal-anchor for type II membrane protein membrane pass occupies residues 10 to 30 (ILLSLFILFIFSLMMGLKMLW). The Lumenal portion of the chain corresponds to 31-462 (PNAASFGPPF…YALDQQQPAS (432 aa)). Residues 60-462 (DFQRSDRINM…YALDQQQPAS (403 aa)) form a catalytic region.

It belongs to the glycosyl hydrolase 99 family. In terms of processing, undergoes proteolytic cleavage in the C-terminal region.

It is found in the golgi apparatus membrane. It catalyses the reaction N-{alpha-Glc-(1-&gt;3)-alpha-Man-(1-&gt;2)-alpha-Man-(1-&gt;2)-alpha-Man-(1-&gt;3)-[alpha-Man-(1-&gt;2)-alpha-Man-(1-&gt;3)-[alpha-Man-(1-&gt;2)-alpha-Man-(1-&gt;6)]-alpha-Man-(1-&gt;6)]-beta-Man-(1-&gt;4)-beta-GlcNAc-(1-&gt;4)-beta-GlcNAc}-L-asparaginyl-[protein] + H2O = alpha-D-glucosyl-(1-&gt;3)-D-mannopyranose + N(4)-{alpha-D-Man-(1-&gt;2)-alpha-D-Man-(1-&gt;3)-[alpha-D-Man-(1-&gt;2)-alpha-D-Man-(1-&gt;3)-[alpha-D-Man-(1-&gt;2)-alpha-D-Man-(1-&gt;6)]-alpha-D-Man-(1-&gt;6)]-beta-D-Man-(1-&gt;4)-beta-D-GlaNAc-(1-&gt;4)-beta-D-GlcNAc}-L-asparaginyl-[protein] (N-glucan mannose isomer 8A1,2,3B1,2). The protein is Glycoprotein endo-alpha-1,2-mannosidase (Manea) of Mus musculus (Mouse).